The sequence spans 348 residues: Spermatogenesis-associated protein 32 (348 aa).

Residues 27 to 36 (YHHHHHPLED) are compositionally biased toward basic and acidic residues. The disordered stretch occupies residues 27-61 (YHHHHHPLEDNKDEDNEMGTELSSMKPPPKVDPDP). 2 positions are modified to phosphoserine: Ser149 and Ser152. The segment at 308–329 (APATSPELQEDKDDSVPGTKKG) is disordered. At Thr330 the chain carries Phosphothreonine.

As to quaternary structure, interacts with syntaxin-1 and ACTB. In terms of tissue distribution, abundantly expressed in testes. Expressed in germ cells, but not in Sertoli or Leydig cells of the adult testis. Localized at the acrosomal region of the round and elongated spermatids at stages VIII-X.

The sequence is that of Spermatogenesis-associated protein 32 (Spata32) from Rattus norvegicus (Rat).